Reading from the N-terminus, the 565-residue chain is Oxygen-dependent choline dehydrogenase (565 aa).

FAD is bound at residue 6–35; sequence DYIIVGAGSAGNTLATRLTEDAGVTVLLLE. His-475 serves as the catalytic Proton acceptor.

It belongs to the GMC oxidoreductase family. It depends on FAD as a cofactor.

It carries out the reaction choline + A = betaine aldehyde + AH2. It catalyses the reaction betaine aldehyde + NAD(+) + H2O = glycine betaine + NADH + 2 H(+). It participates in amine and polyamine biosynthesis; betaine biosynthesis via choline pathway; betaine aldehyde from choline (cytochrome c reductase route): step 1/1. Functionally, involved in the biosynthesis of the osmoprotectant glycine betaine. Catalyzes the oxidation of choline to betaine aldehyde and betaine aldehyde to glycine betaine at the same rate. This chain is Oxygen-dependent choline dehydrogenase, found in Pseudomonas putida (strain GB-1).